The sequence spans 134 residues: Small ribosomal subunit protein bS6 (134 aa).

The segment at 99 to 134 is disordered; it reads PSQLAKSADEKRARKAPRSENFDNDQDDESNDDSDE. The span at 105–119 shows a compositional bias: basic and acidic residues; it reads SADEKRARKAPRSEN. The span at 120–134 shows a compositional bias: acidic residues; sequence FDNDQDDESNDDSDE.

The protein belongs to the bacterial ribosomal protein bS6 family.

Binds together with bS18 to 16S ribosomal RNA. This Psychrobacter sp. (strain PRwf-1) protein is Small ribosomal subunit protein bS6.